The chain runs to 202 residues: Small ribosomal subunit protein uS4c (202 aa).

The 76-residue stretch at 90 to 165 (MRLDNILFRL…SQKYKIPNHL (76 aa)) folds into the S4 RNA-binding domain.

It belongs to the universal ribosomal protein uS4 family. Part of the 30S ribosomal subunit. Contacts protein S5. The interaction surface between S4 and S5 is involved in control of translational fidelity.

The protein resides in the plastid. The protein localises to the chloroplast. One of the primary rRNA binding proteins, it binds directly to 16S rRNA where it nucleates assembly of the body of the 30S subunit. Its function is as follows. With S5 and S12 plays an important role in translational accuracy. The protein is Small ribosomal subunit protein uS4c (rps4) of Diphyscium foliosum (Nut-moss).